A 294-amino-acid chain; its full sequence is GTP cyclohydrolase FolE2 (294 aa).

It belongs to the GTP cyclohydrolase IV family.

It carries out the reaction GTP + H2O = 7,8-dihydroneopterin 3'-triphosphate + formate + H(+). Its pathway is cofactor biosynthesis; 7,8-dihydroneopterin triphosphate biosynthesis; 7,8-dihydroneopterin triphosphate from GTP: step 1/1. Converts GTP to 7,8-dihydroneopterin triphosphate. The sequence is that of GTP cyclohydrolase FolE2 from Acinetobacter baylyi (strain ATCC 33305 / BD413 / ADP1).